We begin with the raw amino-acid sequence, 396 residues long: N-acetylglucosamine-6-phosphate deacetylase (396 aa).

Residues His63, His65, and Glu136 each coordinate Fe cation. Substrate is bound at residue Ala147–Gln148. Residues His202 and His223 each coordinate Fe cation. Residues Asn226–Ala227, Arg234, and Asp255–His258 each bind substrate. Asp281 is a binding site for Fe cation. Residue Asp281 is the Proton donor of the active site. Leu314–Gly316 provides a ligand contact to substrate.

This sequence belongs to the metallo-dependent hydrolases superfamily. NagA family. In terms of assembly, homodimer. It depends on a divalent metal cation as a cofactor.

It catalyses the reaction N-acetyl-D-glucosamine 6-phosphate + H2O = D-glucosamine 6-phosphate + acetate. It participates in amino-sugar metabolism; N-acetylneuraminate degradation; D-fructose 6-phosphate from N-acetylneuraminate: step 4/5. Its function is as follows. Involved in the first committed step in the biosynthesis of amino-sugar-nucleotides. Catalyzes the hydrolysis of the N-acetyl group of N-acetylglucosamine-6-phosphate (GlcNAc-6-P) to yield glucosamine 6-phosphate and acetate. Essential for growth on N-acetylglucosamine. This Bacillus subtilis (strain 168) protein is N-acetylglucosamine-6-phosphate deacetylase (nagA).